The following is a 258-amino-acid chain: Ribosomal RNA large subunit methyltransferase E (258 aa).

Glycine 58, tryptophan 60, aspartate 78, aspartate 96, and aspartate 120 together coordinate S-adenosyl-L-methionine. Residue lysine 160 is the Proton acceptor of the active site.

Belongs to the class I-like SAM-binding methyltransferase superfamily. RNA methyltransferase RlmE family.

The protein localises to the cytoplasm. It catalyses the reaction uridine(2552) in 23S rRNA + S-adenosyl-L-methionine = 2'-O-methyluridine(2552) in 23S rRNA + S-adenosyl-L-homocysteine + H(+). Functionally, specifically methylates the uridine in position 2552 of 23S rRNA at the 2'-O position of the ribose in the fully assembled 50S ribosomal subunit. The protein is Ribosomal RNA large subunit methyltransferase E of Methanococcus maripaludis (strain C7 / ATCC BAA-1331).